Consider the following 170-residue polypeptide: Cytochrome bc1 complex Rieske iron-sulfur subunit (170 aa).

The Rieske domain occupies 63–153; it reads KAALMIIRLE…IGVNDEGYLE (91 aa). Residues C96, H98, C115, and H118 each contribute to the [2Fe-2S] cluster site. C101 and C117 are joined by a disulfide.

In terms of assembly, the cytochrome bc1 complex is composed of a cytochrome b (QcrB), the Rieske iron-sulfur protein (QcrA) and a diheme cytochrome c (QcrC) subunit. [2Fe-2S] cluster is required as a cofactor.

Its subcellular location is the cell membrane. Its function is as follows. Iron-sulfur subunit of the cytochrome bc1 complex, an essential component of the respiratory electron transport chain required for ATP synthesis. The bc1 complex catalyzes the oxidation of menaquinol and the reduction of cytochrome c in the respiratory chain. The bc1 complex operates through a Q-cycle mechanism that couples electron transfer to generation of the proton gradient that drives ATP synthesis. The chain is Cytochrome bc1 complex Rieske iron-sulfur subunit (qcrA) from Streptomyces lividans.